We begin with the raw amino-acid sequence, 169 residues long: Ribosome maturation factor RimP (169 aa).

Belongs to the RimP family.

It is found in the cytoplasm. Functionally, required for maturation of 30S ribosomal subunits. This chain is Ribosome maturation factor RimP, found in Streptomyces avermitilis (strain ATCC 31267 / DSM 46492 / JCM 5070 / NBRC 14893 / NCIMB 12804 / NRRL 8165 / MA-4680).